Consider the following 193-residue polypeptide: Probable nicotinate-nucleotide adenylyltransferase (193 aa).

It belongs to the NadD family.

The catalysed reaction is nicotinate beta-D-ribonucleotide + ATP + H(+) = deamido-NAD(+) + diphosphate. It functions in the pathway cofactor biosynthesis; NAD(+) biosynthesis; deamido-NAD(+) from nicotinate D-ribonucleotide: step 1/1. In terms of biological role, catalyzes the reversible adenylation of nicotinate mononucleotide (NaMN) to nicotinic acid adenine dinucleotide (NaAD). This Flavobacterium psychrophilum (strain ATCC 49511 / DSM 21280 / CIP 103535 / JIP02/86) protein is Probable nicotinate-nucleotide adenylyltransferase.